A 296-amino-acid polypeptide reads, in one-letter code: MESAKRVLVYLTKENSLLQCAKFAQGITGHYSANNGDKAFIHCGLEKNQFVISDCQFLGSARVQLQRPSFCPIKNLSPRQSASLPQEIQGRGVDVGVAVLVQSINKKVLLTRRSKSLNIFPNVWVPPGGHVELGEQLLEAGLRELQEETGLRLQEVSWSMLGLWESAFPPLLSRGLPSRHHIVTYLLVQTNETHQQMQERLCPDEREVSACVWLDTEIAKHIVAAEDSGSPCGPLPASISVLELIHGSLSQSDRSMATFLNSAPKEGEDIERISTGTKYALSLWLDGMPTNSSPCA.

The 147-residue stretch at Gly-90 to Pro-236 folds into the Nudix hydrolase domain. A Nudix box motif is present at residues Gly-129 to Gly-150. 2 residues coordinate Mg(2+): Glu-144 and Glu-148.

Belongs to the Nudix hydrolase family. Mg(2+) serves as cofactor. Requires Mn(2+) as cofactor.

It catalyses the reaction a 5'-end (N(7)-methyl 5'-triphosphoguanosine)-ribonucleoside in mRNA + H2O = N(7)-methyl-GDP + a 5'-end phospho-ribonucleoside in mRNA + 2 H(+). Functionally, acts as a decapping enzyme capable of hydrolyzing monomethylated capped RNAs (in vitro). Hydrolyzes monomethylated capped RNA after alpha and beta phosphates to form N(7)-methyl-GDP. Shows low activity towards unmethylated capped RNA. The sequence is that of m7GpppN-mRNA hydrolase NUDT17 (nudt17) from Xenopus laevis (African clawed frog).